A 400-amino-acid chain; its full sequence is Formate-dependent phosphoribosylglycinamide formyltransferase (400 aa).

N(1)-(5-phospho-beta-D-ribosyl)glycinamide-binding positions include 21–22 (EL) and Glu81. Residues Arg114, Lys155, 160 to 165 (SSGKGQ), 195 to 198 (EGRI), and Glu203 each bind ATP. One can recognise an ATP-grasp domain in the interval 119–313 (RLAAEKLGLP…EFELHVRAIL (195 aa)). Glu272 and Glu284 together coordinate Mg(2+). N(1)-(5-phospho-beta-D-ribosyl)glycinamide-binding positions include Asp291, Lys360, and 367–368 (RR).

This sequence belongs to the PurK/PurT family. In terms of assembly, homodimer.

The catalysed reaction is N(1)-(5-phospho-beta-D-ribosyl)glycinamide + formate + ATP = N(2)-formyl-N(1)-(5-phospho-beta-D-ribosyl)glycinamide + ADP + phosphate + H(+). It participates in purine metabolism; IMP biosynthesis via de novo pathway; N(2)-formyl-N(1)-(5-phospho-D-ribosyl)glycinamide from N(1)-(5-phospho-D-ribosyl)glycinamide (formate route): step 1/1. Its function is as follows. Involved in the de novo purine biosynthesis. Catalyzes the transfer of formate to 5-phospho-ribosyl-glycinamide (GAR), producing 5-phospho-ribosyl-N-formylglycinamide (FGAR). Formate is provided by PurU via hydrolysis of 10-formyl-tetrahydrofolate. The polypeptide is Formate-dependent phosphoribosylglycinamide formyltransferase (Methylococcus capsulatus (strain ATCC 33009 / NCIMB 11132 / Bath)).